A 194-amino-acid polypeptide reads, in one-letter code: Troponin I 4 (194 aa).

The tract at residues 1 to 27 (MSDVDADEARKMAERERKKEEVRKRLE) is disordered. Residues 7-27 (DEARKMAERERKKEEVRKRLE) show a composition bias toward basic and acidic residues.

Belongs to the troponin I family. In terms of tissue distribution, expression is detected only in pharyngeal muscle cells from embryos to adults.

In terms of biological role, troponin I is the inhibitory subunit of troponin, the thin filament regulatory complex which confers calcium-sensitivity to muscle actomyosin ATPase activity. The protein is Troponin I 4 (tni-4) of Caenorhabditis elegans.